The chain runs to 197 residues: Small ribosomal subunit protein uS11m (197 aa).

Over residues 43–52 (AAKEEVEKAE) the composition is skewed to basic and acidic residues. The interval 43 to 66 (AAKEEVEKAETPAPAPSRSSFSIY) is disordered.

It belongs to the universal ribosomal protein uS11 family. In terms of assembly, component of the mitochondrial ribosome small subunit (28S) which comprises a 12S rRNA and about 30 distinct proteins.

The protein resides in the mitochondrion. This Bos taurus (Bovine) protein is Small ribosomal subunit protein uS11m (MRPS11).